Reading from the N-terminus, the 374-residue chain is Protein-glutamate methylesterase/protein-glutamine glutaminase 1 (374 aa).

The 118-residue stretch at 4-121 folds into the Response regulatory domain; it reads KVLVVDDSSF…ATNKDEAILL (118 aa). Aspartate 55 is subject to 4-aspartylphosphate. Positions 141–170 are disordered; the sequence is PSVAPVTPRPTTGSAVGNATTPVQSASAPV. Residues 149 to 167 are compositionally biased toward polar residues; it reads RPTTGSAVGNATTPVQSAS. Positions 174-374 constitute a CheB-type methylesterase domain; that stretch reads PLSSIRASGK…ESILKESARG (201 aa). Active-site residues include serine 193, histidine 220, and aspartate 316.

Belongs to the CheB family. Phosphorylated by CheA. Phosphorylation of the N-terminal regulatory domain activates the methylesterase activity.

It is found in the cytoplasm. The enzyme catalyses [protein]-L-glutamate 5-O-methyl ester + H2O = L-glutamyl-[protein] + methanol + H(+). The catalysed reaction is L-glutaminyl-[protein] + H2O = L-glutamyl-[protein] + NH4(+). Functionally, involved in chemotaxis. Part of a chemotaxis signal transduction system that modulates chemotaxis in response to various stimuli. Catalyzes the demethylation of specific methylglutamate residues introduced into the chemoreceptors (methyl-accepting chemotaxis proteins or MCP) by CheR. Also mediates the irreversible deamidation of specific glutamine residues to glutamic acid. This Shewanella oneidensis (strain ATCC 700550 / JCM 31522 / CIP 106686 / LMG 19005 / NCIMB 14063 / MR-1) protein is Protein-glutamate methylesterase/protein-glutamine glutaminase 1.